A 414-amino-acid polypeptide reads, in one-letter code: Gamma-glutamyl phosphate reductase (414 aa).

It belongs to the gamma-glutamyl phosphate reductase family.

Its subcellular location is the cytoplasm. It catalyses the reaction L-glutamate 5-semialdehyde + phosphate + NADP(+) = L-glutamyl 5-phosphate + NADPH + H(+). Its pathway is amino-acid biosynthesis; L-proline biosynthesis; L-glutamate 5-semialdehyde from L-glutamate: step 2/2. Functionally, catalyzes the NADPH-dependent reduction of L-glutamate 5-phosphate into L-glutamate 5-semialdehyde and phosphate. The product spontaneously undergoes cyclization to form 1-pyrroline-5-carboxylate. In Xanthomonas oryzae pv. oryzae (strain KACC10331 / KXO85), this protein is Gamma-glutamyl phosphate reductase.